The following is a 363-amino-acid chain: Chorismate synthase (363 aa).

The NADP(+) site is built by R48 and R54. FMN contacts are provided by residues 125–127, 237–238, G277, 292–296, and R318; these read RSS, NA, and KPTSS.

It belongs to the chorismate synthase family. As to quaternary structure, homotetramer. FMNH2 is required as a cofactor.

The catalysed reaction is 5-O-(1-carboxyvinyl)-3-phosphoshikimate = chorismate + phosphate. Its pathway is metabolic intermediate biosynthesis; chorismate biosynthesis; chorismate from D-erythrose 4-phosphate and phosphoenolpyruvate: step 7/7. Catalyzes the anti-1,4-elimination of the C-3 phosphate and the C-6 proR hydrogen from 5-enolpyruvylshikimate-3-phosphate (EPSP) to yield chorismate, which is the branch point compound that serves as the starting substrate for the three terminal pathways of aromatic amino acid biosynthesis. This reaction introduces a second double bond into the aromatic ring system. This Pseudomonas fluorescens (strain Pf0-1) protein is Chorismate synthase.